Reading from the N-terminus, the 459-residue chain is Ribulose bisphosphate carboxylase large chain (459 aa).

Lysine 4 bears the N6,N6,N6-trimethyllysine mark. Substrate contacts are provided by asparagine 113 and threonine 163. Residue lysine 165 is the Proton acceptor of the active site. Lysine 167 lines the substrate pocket. Residues lysine 191, aspartate 193, and glutamate 194 each coordinate Mg(2+). The residue at position 191 (lysine 191) is an N6-carboxylysine. Histidine 284 acts as the Proton acceptor in catalysis. Residues arginine 285, histidine 317, and serine 369 each coordinate substrate.

It belongs to the RuBisCO large chain family. Type I subfamily. Heterohexadecamer of 8 large chains and 8 small chains; disulfide-linked. The disulfide link is formed within the large subunit homodimers. It depends on Mg(2+) as a cofactor. In terms of processing, the disulfide bond which can form in the large chain dimeric partners within the hexadecamer appears to be associated with oxidative stress and protein turnover.

The protein localises to the plastid. It is found in the chloroplast. The catalysed reaction is 2 (2R)-3-phosphoglycerate + 2 H(+) = D-ribulose 1,5-bisphosphate + CO2 + H2O. It catalyses the reaction D-ribulose 1,5-bisphosphate + O2 = 2-phosphoglycolate + (2R)-3-phosphoglycerate + 2 H(+). In terms of biological role, ruBisCO catalyzes two reactions: the carboxylation of D-ribulose 1,5-bisphosphate, the primary event in carbon dioxide fixation, as well as the oxidative fragmentation of the pentose substrate in the photorespiration process. Both reactions occur simultaneously and in competition at the same active site. In Roridula gorgonias (South African fly bush), this protein is Ribulose bisphosphate carboxylase large chain.